The chain runs to 94 residues: Co-chaperonin GroES (94 aa).

This sequence belongs to the GroES chaperonin family. As to quaternary structure, heptamer of 7 subunits arranged in a ring. Interacts with the chaperonin GroEL.

The protein resides in the cytoplasm. In terms of biological role, together with the chaperonin GroEL, plays an essential role in assisting protein folding. The GroEL-GroES system forms a nano-cage that allows encapsulation of the non-native substrate proteins and provides a physical environment optimized to promote and accelerate protein folding. GroES binds to the apical surface of the GroEL ring, thereby capping the opening of the GroEL channel. This Streptococcus pneumoniae (strain ATCC 700669 / Spain 23F-1) protein is Co-chaperonin GroES.